The following is a 187-amino-acid chain: Superoxide dismutase [Cu-Zn] (187 aa).

A signal peptide spans 1 to 21 (MSLLPTGTLILLVLFILVLIT). The Cu cation site is built by histidine 76, histidine 78, and histidine 93. Residues cysteine 87 and cysteine 176 are joined by a disulfide bond. 4 residues coordinate Zn(2+): histidine 93, histidine 101, histidine 110, and aspartate 113. Residue histidine 150 coordinates Cu cation.

The protein belongs to the Cu-Zn superoxide dismutase family. Requires Cu cation as cofactor. Zn(2+) is required as a cofactor.

It catalyses the reaction 2 superoxide + 2 H(+) = H2O2 + O2. Functionally, destroys radicals which are normally produced within the cells and which are toxic to biological systems. In Chlorella (PBCV-1), this protein is Superoxide dismutase [Cu-Zn].